The chain runs to 403 residues: Para-nitrophenol 4-monooxygenase (403 aa).

Residues 6–35 (GVVVVGGGPVGLLTALKLGKAGIKVVVLEA) and 279–289 (FRRGRVVLAGD) contribute to the FAD site.

Belongs to the PheA/TfdB FAD monooxygenase family. As to quaternary structure, monomer. Requires FAD as cofactor.

It carries out the reaction 4-nitrophenol + NADPH + O2 + H(+) = 1,4-benzoquinone + nitrite + NADP(+) + H2O. The protein operates within xenobiotic degradation; 4-nitrophenol degradation. Involved in the degradation of para-nitrophenol (4-NP). Catalyzes oxidation of 4-nitrophenol (4-NP) at position 4 with concomitant removal of the nitro group as nitrite and production of para-benzoquinone. This is Para-nitrophenol 4-monooxygenase (pnpA) from Pseudomonas sp. (strain WBC-3).